The primary structure comprises 734 residues: Photosystem I P700 chlorophyll a apoprotein A2 (734 aa).

Helical transmembrane passes span 46–69 (IFAS…FHVA), 135–158 (LYTG…LHLQ), 175–199 (LNHH…HVAI), 273–291 (IAHH…GHMY), 330–353 (IHFQ…QHMY), 369–395 (AALY…IFFI), 417–439 (AIIS…LYVH), and 517–535 (FLVH…LILV). [4Fe-4S] cluster-binding residues include Cys-559 and Cys-568. 2 helical membrane passes run 575–596 (AFYL…YWHW) and 643–665 (LSVW…MFLI). Chlorophyll a is bound by residues His-654, Met-662, and Tyr-670. Residue Trp-671 participates in phylloquinone binding. The chain crosses the membrane as a helical span at residues 707-727 (LVGLAHFSVGYIFTYAAFLIA).

It belongs to the PsaA/PsaB family. In terms of assembly, the PsaA/B heterodimer binds the P700 chlorophyll special pair and subsequent electron acceptors. PSI consists of a core antenna complex that captures photons, and an electron transfer chain that converts photonic excitation into a charge separation. The eukaryotic PSI reaction center is composed of at least 11 subunits. It depends on P700 is a chlorophyll a/chlorophyll a' dimer, A0 is one or more chlorophyll a, A1 is one or both phylloquinones and FX is a shared 4Fe-4S iron-sulfur center. as a cofactor.

It localises to the plastid. It is found in the chloroplast thylakoid membrane. The catalysed reaction is reduced [plastocyanin] + hnu + oxidized [2Fe-2S]-[ferredoxin] = oxidized [plastocyanin] + reduced [2Fe-2S]-[ferredoxin]. Its function is as follows. PsaA and PsaB bind P700, the primary electron donor of photosystem I (PSI), as well as the electron acceptors A0, A1 and FX. PSI is a plastocyanin-ferredoxin oxidoreductase, converting photonic excitation into a charge separation, which transfers an electron from the donor P700 chlorophyll pair to the spectroscopically characterized acceptors A0, A1, FX, FA and FB in turn. Oxidized P700 is reduced on the lumenal side of the thylakoid membrane by plastocyanin. This is Photosystem I P700 chlorophyll a apoprotein A2 from Oryza sativa (Rice).